The chain runs to 232 residues: MIKNHWMKKLKYLSLFFLLFAIYWFPDVILAYPEVYLKSLVGYERQVVATWIFLGNMSISLFLGILICYKLGYYKNTISIFKIKNLLFLLITTIILFVIYFFSYTYYNSHFITPGIAKTQAAFSIQIVFPFVQFITIAICAPIFEEASFRTTIYSFFKNDKIAYIVSCVGFAWMHTGPNPILIVYLPMSIVLTSIYHRRRVLGESILVHGVFNALLPIVIPLLQVITGLYYL.

Transmembrane regions (helical) follow at residues 12–32 (YLSLFFLLFAIYWFPDVILAY), 47–67 (VVATWIFLGNMSISLFLGILI), 86–106 (LLFLLITTIILFVIYFFSYTY), 124–144 (SIQIVFPFVQFITIAICAPIF), 165–185 (IVSCVGFAWMHTGPNPILIVY), and 206–226 (ILVHGVFNALLPIVIPLLQVI).

It belongs to the UPF0177 family.

The protein resides in the cell membrane. Functionally, the function of this protein is currently unknown, but it has been shown that it is not necessary for phage resistance. The protein is UPF0177 protein in abiGi 5'region of Lactococcus lactis subsp. cremoris (Streptococcus cremoris).